The sequence spans 248 residues: Probable transcriptional regulatory protein BOV_1660 (248 aa).

Belongs to the TACO1 family.

The protein resides in the cytoplasm. The chain is Probable transcriptional regulatory protein BOV_1660 from Brucella ovis (strain ATCC 25840 / 63/290 / NCTC 10512).